Consider the following 393-residue polypeptide: D-alanyl-D-alanine carboxypeptidase DacA (393 aa).

Positions 1–18 (MLKRTTKIAFLSSFVALS) are cleaved as a signal peptide. Residue Ser-65 is the Acyl-ester intermediate of the active site. Lys-68 serves as the catalytic Proton acceptor. Residue Ser-128 is part of the active site. Lys-231 serves as a coordination point for substrate.

The protein belongs to the peptidase S11 family.

The protein resides in the cell inner membrane. It catalyses the reaction Preferential cleavage: (Ac)2-L-Lys-D-Ala-|-D-Ala. Also transpeptidation of peptidyl-alanyl moieties that are N-acyl substituents of D-alanine.. The protein operates within cell wall biogenesis; peptidoglycan biosynthesis. Functionally, removes C-terminal D-alanyl residues from sugar-peptide cell wall precursors. This Haemophilus influenzae (strain ATCC 51907 / DSM 11121 / KW20 / Rd) protein is D-alanyl-D-alanine carboxypeptidase DacA (dacA).